The chain runs to 388 residues: Flap endonuclease 1 (388 aa).

An N-domain region spans residues 1–105 (MGIKNLTSLI…GELAKRYARR (105 aa)). Asp-34 contacts Mg(2+). Residue Arg-71 coordinates DNA. The Mg(2+) site is built by Asp-87, Glu-159, Glu-161, Asp-180, and Asp-182. The interval 123–254 (DVQKFQKRTI…KKSFDMITKH (132 aa)) is I-domain. Glu-159 lines the DNA pocket. Residues Gly-232 and Asp-234 each contribute to the DNA site. Asp-234 provides a ligand contact to Mg(2+). The tract at residues 338–346 (VQTRIDTFF) is interaction with PCNA. Residues 349–388 (IKRPRDEDAGSAKKKQKTVAKPGAAGSKKKPAAKKAAGKK) form a disordered region. Basic residues predominate over residues 375 to 388 (SKKKPAAKKAAGKK).

The protein belongs to the XPG/RAD2 endonuclease family. FEN1 subfamily. As to quaternary structure, interacts with PCNA. Three molecules of repG bind to one PCNA trimer with each molecule binding to one PCNA monomer. PCNA stimulates the nuclease activity without altering cleavage specificity. It depends on Mg(2+) as a cofactor. In terms of processing, phosphorylated. Phosphorylation upon DNA damage induces relocalization to the nuclear plasma.

Its subcellular location is the nucleus. It localises to the nucleolus. The protein localises to the nucleoplasm. The protein resides in the mitochondrion. In terms of biological role, structure-specific nuclease with 5'-flap endonuclease and 5'-3' exonuclease activities involved in DNA replication and repair. During DNA replication, cleaves the 5'-overhanging flap structure that is generated by displacement synthesis when DNA polymerase encounters the 5'-end of a downstream Okazaki fragment. It enters the flap from the 5'-end and then tracks to cleave the flap base, leaving a nick for ligation. Also involved in the long patch base excision repair (LP-BER) pathway, by cleaving within the apurinic/apyrimidinic (AP) site-terminated flap. Acts as a genome stabilization factor that prevents flaps from equilibrating into structures that lead to duplications and deletions. Also possesses 5'-3' exonuclease activity on nicked or gapped double-stranded DNA, and exhibits RNase H activity. Also involved in replication and repair of rDNA and in repairing mitochondrial DNA. The polypeptide is Flap endonuclease 1 (Heterostelium pallidum (strain ATCC 26659 / Pp 5 / PN500) (Cellular slime mold)).